Reading from the N-terminus, the 440-residue chain is Protein ABHD8 (440 aa).

Residues 123–158 (DPAGSDGRSAPGSGSGSGSGSGSGGRRRRARRPKRT) are disordered. Residues 124 to 134 (PAGSDGRSAPG) are compositionally biased toward low complexity. Residues 135 to 146 (SGSGSGSGSGSG) show a composition bias toward gly residues. The segment covering 147-158 (GRRRRARRPKRT) has biased composition (basic residues). One can recognise an AB hydrolase-1 domain in the interval 178-280 (VLFFIHGVGG…HKVIMINGGG (103 aa)). Residues Ser-253, Asp-371, and His-399 each act as charge relay system in the active site.

Belongs to the AB hydrolase superfamily. Interacts with NLRP3 (via NACHT and LLR domains); this interaction is enhanced in the presence of NLRP3 inflammasome inducers, such as ATP, nigericin, silica, or alum. Interacts with ZDHHC12.

The protein localises to the cytoplasm. Its function is as follows. Negatively regulates NLRP3-driven inflammation. Promotes NLRP3 degradation through the chaperone-mediated autophagy (CMA) pathway, hence attenuating inflammasome activation and IL1B secretion. Acts by recruiting palmitoyltransferase ZDHHC12 to NLRP3, facilitating NLRP3 palmitoylation and subsequent degradation. The protein is Protein ABHD8 of Macaca fascicularis (Crab-eating macaque).